The primary structure comprises 602 residues: Bifunctional xylanase/deacetylase (602 aa).

The N-terminal stretch at 1–14 is a signal peptide; it reads MSATLLVPSMTVKA. Residues 17–211 enclose the GH11 domain; it reads TIYNNKTGNQ…SSGSASVYKN (195 aa). E108 (nucleophile) is an active-site residue. E198 (proton donor) is an active-site residue. The interval 216-240 is disordered; the sequence is GGSSSSSGNQGGNQGGNTGNENAGN. The segment covering 224 to 233 has biased composition (gly residues); the sequence is NQGGNQGGNT. A CBM6 domain is found at 249–366; that stretch reads DKIQCETMTK…DAYLDYFNNS (118 aa). One can recognise a NodB homology domain in the interval 402 to 578; sequence KLIALTFDDG…GLKNQGYTFV (177 aa).

Belongs to the glycosyl hydrolase 11 (cellulase G) family. In terms of processing, in the later growth phases, seems to undergo a proteolytic cleavage into a 30 kDa protein possessing xylanolytic activity.

Its subcellular location is the secreted. The catalysed reaction is Endohydrolysis of (1-&gt;4)-beta-D-xylosidic linkages in xylans.. The protein operates within glycan degradation; xylan degradation. In terms of biological role, endo-acting xylanase which specifically cleaves internal linkages on the xylan backbone, releasing xylooligosaccharides. Is also probably able, via its C-terminal domain, to remove acetyl groups from acetylated xylan, and thus it is probably capable of hydrolyzing acetylated xylan. The sequence is that of Bifunctional xylanase/deacetylase (xyn11A) from Pseudobutyrivibrio xylanivorans.